The sequence spans 402 residues: NAD-dependent protein deacetylase sirtuin-7 (402 aa).

A disordered region spans residues 1–23 (MAAGGGLSRSERKAAERVRRLRE). Over residues 9–23 (RSERKAAERVRRLRE) the composition is skewed to basic and acidic residues. The Deacetylase sirtuin-type domain occupies 83–330 (PEELRRKVRE…QLLMNELGLE (248 aa)). Residues 108–127 (GAGISTAASIPDYRGPNGVW) and 168–171 (QNCD) contribute to the NAD(+) site. Histidine 188 serves as the catalytic Proton acceptor. 4 residues coordinate Zn(2+): cysteine 196, cysteine 199, cysteine 226, and cysteine 229. NAD(+)-binding positions include 269 to 271 (GSS), 298 to 300 (NLQ), and cysteine 316. The tract at residues 355-402 (SHSRKSLCRSREEAPPGDQSDPLASAPPILGGWFGRGCAKRAKRKKVA) is disordered. At arginine 390 the chain carries Asymmetric dimethylarginine; alternate. Omega-N-methylarginine; alternate is present on arginine 390. The span at 392–402 (CAKRAKRKKVA) shows a compositional bias: basic residues.

It belongs to the sirtuin family. Class IV subfamily. As to quaternary structure, interacts with UBTF and the RNA polymerase I complex. Interacts with components of the B-WICH complex, such as MYBBP1A, SMARCA5/SNF2H and BAZ1B/WSTF. Interacts with ELK4, leading to stabilization at target promoters for H3K18Ac deacetylation. Interacts with histone H2A and/or histone H2B. Interacts with DNMT1. Interacts with SIRT1. Requires Zn(2+) as cofactor. Post-translationally, phosphorylated during mitosis. In terms of processing, methylation at Arg-390 by PRMT6 inhibits the H3K18Ac histone deacetylase activity, promoting mitochondria biogenesis and maintaining mitochondria respiration. Ubiquitinated via 'Lys-63'-linked ubiquitin chains. Deubiquitinated by USP7, inhibiting the H3K18Ac histone deacetylase activity and regulating gluconeogenesis. Ubiquitinated by E3 ubiquitin-protein ligase complex containing FBXO7; leading to proteasomal degradation. As to expression, detected in liver, spleen and testis. Detected in embryos.

The protein localises to the nucleus. It localises to the nucleolus. The protein resides in the nucleoplasm. It is found in the chromosome. Its subcellular location is the cytoplasm. The catalysed reaction is N(6)-acetyl-L-lysyl-[protein] + NAD(+) + H2O = 2''-O-acetyl-ADP-D-ribose + nicotinamide + L-lysyl-[protein]. It carries out the reaction N(6)-glutaryl-L-lysyl-[protein] + NAD(+) + H2O = 2''-O-glutaryl-ADP-D-ribose + nicotinamide + L-lysyl-[protein]. The enzyme catalyses N(6)-succinyl-L-lysyl-[protein] + NAD(+) + H2O = 2''-O-succinyl-ADP-D-ribose + nicotinamide + L-lysyl-[protein]. It catalyses the reaction N(6)-propanoyl-L-lysyl-[protein] + NAD(+) + H2O = 3''-O-propanoyl-ADP-D-ribose + nicotinamide + L-lysyl-[protein]. The catalysed reaction is N(6)-decanoyl-L-lysyl-[protein] + NAD(+) + H2O = 2''-O-decanoyl-ADP-D-ribose + nicotinamide + L-lysyl-[protein]. With respect to regulation, NAD-dependent protein-lysine deacetylase and deacylase activities are activated by nucleic acids. Histone deacetylase activity is activated by DNA. Protein-lysine deacylase activity is activated by RNA. H3K18Ac histone deacetylase activity is inhibited by methylation at Arg-390. H3K18Ac histone deacetylase activity is inhibited by deubiquitination by USP7. Functionally, NAD-dependent protein-lysine deacylase that can act both as a deacetylase or deacylase (desuccinylase, depropionylase and deglutarylase), depending on the context. Also acts as a dedecanoylase. Specifically mediates deacetylation of histone H3 at 'Lys-18' (H3K18Ac). In contrast to other histone deacetylases, displays strong preference for a specific histone mark, H3K18Ac, directly linked to control of gene expression. H3K18Ac is mainly present around the transcription start site of genes and has been linked to activation of nuclear hormone receptors; SIRT7 thereby acts as a transcription repressor. Moreover, H3K18 hypoacetylation has been reported as a marker of malignancy in various cancers and seems to maintain the transformed phenotype of cancer cells. Also able to mediate deacetylation of histone H3 at 'Lys-36' (H3K36Ac) in the context of nucleosomes. Also mediates deacetylation of non-histone proteins, such as ATM, CDK9, DDX21, DDB1, FBL, FKBP5/FKBP51, GABPB1, RAN, RRP9/U3-55K and POLR1E/PAF53. Enriched in nucleolus where it stimulates transcription activity of the RNA polymerase I complex. Acts by mediating the deacetylation of the RNA polymerase I subunit POLR1E/PAF53, thereby promoting the association of RNA polymerase I with the rDNA promoter region and coding region. In response to metabolic stress, SIRT7 is released from nucleoli leading to hyperacetylation of POLR1E/PAF53 and decreased RNA polymerase I transcription. Required to restore the transcription of ribosomal RNA (rRNA) at the exit from mitosis. Promotes pre-ribosomal RNA (pre-rRNA) cleavage at the 5'-terminal processing site by mediating deacetylation of RRP9/U3-55K, a core subunit of the U3 snoRNP complex. Mediates 'Lys-37' deacetylation of Ran, thereby regulating the nuclear export of NF-kappa-B subunit RELA/p65. Acts as a regulator of DNA damage repair by mediating deacetylation of ATM during the late stages of DNA damage response, promoting ATM dephosphorylation and deactivation. May also deacetylate p53/TP53 and promotes cell survival, however such data need additional confirmation. Suppresses the activity of the DCX (DDB1-CUL4-X-box) E3 ubiquitin-protein ligase complexes by mediating deacetylation of DDB1, which prevents the interaction between DDB1 and CUL4 (CUL4A or CUL4B). Activates RNA polymerase II transcription by mediating deacetylation of CDK9, thereby promoting 'Ser-2' phosphorylation of the C-terminal domain (CTD) of RNA polymerase II. Deacetylates FBL, promoting histone-glutamine methyltransferase activity of FBL. Acts as a regulator of mitochondrial function by catalyzing deacetylation of GABPB1. Regulates Akt/AKT1 activity by mediating deacetylation of FKBP5/FKBP51. Required to prevent R-loop-associated DNA damage and transcription-associated genomic instability by mediating deacetylation and subsequent activation of DDX21, thereby overcoming R-loop-mediated stalling of RNA polymerases. In addition to protein deacetylase activity, also acts as protein-lysine deacylase. Acts as a protein depropionylase by mediating depropionylation of Osterix (SP7), thereby regulating bone formation by osteoblasts. Acts as a histone deglutarylase by mediating deglutarylation of histone H4 on 'Lys-91' (H4K91glu); a mark that destabilizes nucleosomes by promoting dissociation of the H2A-H2B dimers from nucleosomes. Acts as a histone desuccinylase: in response to DNA damage, recruited to DNA double-strand breaks (DSBs) and catalyzes desuccinylation of histone H3 on 'Lys-122' (H3K122succ), thereby promoting chromatin condensation and DSB repair. Also promotes DSB repair by promoting H3K18Ac deacetylation, regulating non-homologous end joining (NHEJ). Along with its role in DNA repair, required for chromosome synapsis during prophase I of female meiosis by catalyzing H3K18Ac deacetylation. Involved in transcriptional repression of LINE-1 retrotransposon via H3K18Ac deacetylation, and promotes their association with the nuclear lamina. Required to stabilize ribosomal DNA (rDNA) heterochromatin and prevent cellular senescence induced by rDNA instability. Acts as a negative regulator of SIRT1 by preventing autodeacetylation of SIRT1, restricting SIRT1 deacetylase activity. The chain is NAD-dependent protein deacetylase sirtuin-7 from Mus musculus (Mouse).